The sequence spans 834 residues: Leucine--tRNA ligase (834 aa).

Positions 36–46 (PYPSGKIHVGH) match the 'HIGH' region motif. The short motif at 602–606 (KMSKS) is the 'KMSKS' region element. Position 605 (lysine 605) interacts with ATP.

The protein belongs to the class-I aminoacyl-tRNA synthetase family.

Its subcellular location is the cytoplasm. The catalysed reaction is tRNA(Leu) + L-leucine + ATP = L-leucyl-tRNA(Leu) + AMP + diphosphate. The protein is Leucine--tRNA ligase of Rickettsia canadensis (strain McKiel).